A 357-amino-acid chain; its full sequence is F-box only protein 25 (357 aa).

Residues 1-83 are interaction with beta-actin; sequence MPFLGQDWRS…DTAAHSFYRE (83 aa). The 48-residue stretch at 224-271 folds into the F-box domain; the sequence is GLTLSDLPLHMLNNILYRFSDGWDIVTLGQVTPTLYMLSEDRRLWKRL.

In terms of assembly, part of a SCF (SKP1-cullin-F-box) protein ligase complex consisting of FBXO25, SKP1, CUL1 and RBX1. Interacts directly with SKP1 and CUL1. Interacts (via C-terminus) with actin (via N-terminus).

It localises to the nucleus. It participates in protein modification; protein ubiquitination. Functionally, substrate-recognition component of the SCF (SKP1-CUL1-F-box protein)-type E3 ubiquitin ligase complex. May play a role in accumulation of expanded polyglutamine (polyQ) protein huntingtin (HTT). This is F-box only protein 25 (Fbxo25) from Rattus norvegicus (Rat).